A 366-amino-acid polypeptide reads, in one-letter code: Tudor domain-containing protein 10 (366 aa).

Residues threonine 34–arginine 107 form the RRM domain. One can recognise a Tudor domain in the interval phenylalanine 210–lysine 317. A coiled-coil region spans residues threonine 216–glutamine 237.

The polypeptide is Tudor domain-containing protein 10 (TDRD10) (Homo sapiens (Human)).